The primary structure comprises 717 residues: MPSMAQGELKSFVQNSRPNPKSPTVSPFSMRQKIAEHRRSLPIASVEKRLVEEVQKNDILIIVGETGSGKTTQLPQFLYNAGFCREGKMIGITQPRRIAAVTVAKRVAEECEVQLGQKVGYSIRFDDTTSGSTRLKYMTDGLLLREALLDPHLSRYSVIIVDEAHDRSVHTDVLLALLKKIQRTRSQPVSEKTEFGNVASQVQTTTRDANGPQQNGVLKGYQGRKLSPLKLIIMSASLDARVFSEYFGGAKAVHVQGRQFPVDILYTVHPESDYVDATLVTIFQIHFEEKPGDILVFLTGQDEIESVERLVQERLQNIPEDKRKLLPLAIFSALPSEQQMKVFAPAPTGFRKVILATNIAETSITIPGIRYVIDPGFVKARSYDPSKGMESLDVVPASKAQTLQRSGRAGREGPGKSFRLYPEREFEKLEDSTKPEIKRCNLSNIILQLKALGIDDIVGFDFIDKPSRGAIIKALAELHSLGALADDGKLENPVGYQMSRLPLEPVYSKALILANQFNCLEEMLITVAVLSVESIFYDPREKREEARTSKNHFASVEGDHLTYLSVYRESDEFLEKRKAAGSGNNIDKIMKKWCKENYVNSRSLKHARDIYRQIREHVEQIGFNVSSCGNDMLAFRRCLAASFFLKAAQRQLDGTYRALESGEVVHIHPTSVLFRAKPECVIFNELMQTSKKYIKNLTIIDSLWLSELAPHHFQTAE.

The segment at 1–29 (MPSMAQGELKSFVQNSRPNPKSPTVSPFS) is disordered. The span at 12–29 (FVQNSRPNPKSPTVSPFS) shows a compositional bias: polar residues. The Helicase ATP-binding domain maps to 51–256 (VEEVQKNDIL…FGGAKAVHVQ (206 aa)). 64-71 (GETGSGKT) contacts ATP. Positions 162 to 165 (DEAH) match the DEAH box motif. Residues 278-453 (TLVTIFQIHF…NIILQLKALG (176 aa)) form the Helicase C-terminal domain.

Belongs to the DEAD box helicase family. DEAH subfamily. PRP22 sub-subfamily. In terms of tissue distribution, widely expressed but spatially and temporally regulated during development.

Its subcellular location is the nucleus. The protein resides in the nucleolus. It carries out the reaction ATP + H2O = ADP + phosphate + H(+). Functionally, involved in pre-mRNA splicing. Plays a role during development in processes such as meristem maintenance, leaf morphogenesis and root morphogenesis. The protein is Pre-mRNA-splicing factor ATP-dependent RNA helicase DEAH10 of Arabidopsis thaliana (Mouse-ear cress).